The following is a 377-amino-acid chain: Palmitoyltransferase ZDHHC16 (377 aa).

The Cytoplasmic segment spans residues 1-77 (MRGQRSLLLG…VYWLVDNVIR (77 aa)). The helical transmembrane segment at 78 to 98 (WFGVVFVVLVIVLTGSIVAIA) threads the bilayer. The Lumenal portion of the chain corresponds to 99 to 116 (YLCVLPLILRTYSVPRLC). The helical transmembrane segment at 117-137 (WHFFYSHWNLILIVFHYYQAI) threads the bilayer. Topologically, residues 138-198 (TTPPGYPPQG…NNCVGHYNHR (61 aa)) are cytoplasmic. In terms of domain architecture, DHHC spans 155 to 205 (SICKKCIYPKPARTHHCSICNRCVLKMDHHCPWLNNCVGHYNHRYFFSFCF). Cys185 acts as the S-palmitoyl cysteine intermediate in catalysis. Residues 199 to 219 (YFFSFCFFMTLGCVYCSYGSW) traverse the membrane as a helical segment. The Lumenal segment spans residues 220-266 (DLFREAYAAIEKMKQLDKNKLQAVANQTYHQTPPPIFSFRERMTHKS). A helical membrane pass occupies residues 267–287 (LVYLWFLCSSVALALGALTVW). The Cytoplasmic portion of the chain corresponds to 288 to 377 (HAVLISRGET…TAHSASVMAV (90 aa)).

The protein belongs to the DHHC palmitoyltransferase family. As to quaternary structure, interacts with ABL1. Interacts with COPS5/JAB1.

The protein localises to the endoplasmic reticulum membrane. It catalyses the reaction L-cysteinyl-[protein] + hexadecanoyl-CoA = S-hexadecanoyl-L-cysteinyl-[protein] + CoA. Functionally, palmitoyl acyltransferase that mediates palmitoylation of proteins such as PLN and ZDHHC6. Required during embryonic heart development and cardiac function, possibly by mediating palmitoylation of PLN, thereby affecting PLN phosphorylation and homooligomerization. Also required for eye development. Palmitoylates ZDHHC6, affecting the quaternary assembly of ZDHHC6, its localization, stability and function. May play a role in DNA damage response. May be involved in apoptosis regulation. Involved in the proliferation of neural stem cells by regulating the FGF/ERK pathway. The polypeptide is Palmitoyltransferase ZDHHC16 (Macaca fascicularis (Crab-eating macaque)).